The following is a 152-amino-acid chain: Deoxyuridine 5'-triphosphate nucleotidohydrolase (152 aa).

Substrate contacts are provided by residues 65 to 67 (RSG), N78, and 82 to 84 (TID).

This sequence belongs to the dUTPase family. Mg(2+) is required as a cofactor.

The enzyme catalyses dUTP + H2O = dUMP + diphosphate + H(+). It functions in the pathway pyrimidine metabolism; dUMP biosynthesis; dUMP from dCTP (dUTP route): step 2/2. This enzyme is involved in nucleotide metabolism: it produces dUMP, the immediate precursor of thymidine nucleotides and it decreases the intracellular concentration of dUTP so that uracil cannot be incorporated into DNA. The polypeptide is Deoxyuridine 5'-triphosphate nucleotidohydrolase (Chlorobaculum tepidum (strain ATCC 49652 / DSM 12025 / NBRC 103806 / TLS) (Chlorobium tepidum)).